The following is a 390-amino-acid chain: S-adenosylmethionine synthase (390 aa).

His-17 serves as a coordination point for ATP. Position 19 (Asp-19) interacts with Mg(2+). K(+) is bound at residue Glu-45. The L-methionine site is built by Glu-58 and Gln-101. A flexible loop region spans residues 101–111 (QSPDIGQGVDT). Residues 160–162 (DGK), 226–227 (RF), Asp-235, 241–242 (RK), Ala-258, and Lys-262 each bind ATP. Asp-235 contacts L-methionine. Lys-266 is a binding site for L-methionine.

Belongs to the AdoMet synthase family. Homotetramer; dimer of dimers. Mg(2+) is required as a cofactor. It depends on K(+) as a cofactor.

The protein resides in the cytoplasm. It catalyses the reaction L-methionine + ATP + H2O = S-adenosyl-L-methionine + phosphate + diphosphate. The protein operates within amino-acid biosynthesis; S-adenosyl-L-methionine biosynthesis; S-adenosyl-L-methionine from L-methionine: step 1/1. Its function is as follows. Catalyzes the formation of S-adenosylmethionine (AdoMet) from methionine and ATP. The overall synthetic reaction is composed of two sequential steps, AdoMet formation and the subsequent tripolyphosphate hydrolysis which occurs prior to release of AdoMet from the enzyme. This chain is S-adenosylmethionine synthase, found in Anaeromyxobacter dehalogenans (strain 2CP-1 / ATCC BAA-258).